We begin with the raw amino-acid sequence, 214 residues long: NKG2-D type II integral membrane protein (214 aa).

The Cytoplasmic segment spans residues 1 to 56 (MGWIRDRRSPSSMEIRELHNRDVINRGAFKSRQKRTQTLITSKCGENPSPFFLARS). The helical; Signal-anchor for type II membrane protein transmembrane segment at 57 to 77 (IAIAMGIRFIVMVMIYSGMII) threads the bilayer. At 78 to 214 (NLLFNQEAPS…NTYICMKRTV (137 aa)) the chain is on the extracellular side. 2 cysteine pairs are disulfide-bonded: cysteine 94/cysteine 103 and cysteine 97/cysteine 108. One can recognise a C-type lectin domain in the interval 98-210 (PKNWICYRNS…CLTLNTYICM (113 aa)). 4 N-linked (GlcNAc...) asparagine glycosylation sites follow: asparagine 113, asparagine 129, asparagine 161, and asparagine 184. 2 cysteine pairs are disulfide-bonded: cysteine 125–cysteine 209 and cysteine 187–cysteine 201.

Homodimer; disulfide-linked. Heterohexamer composed of two subunits of KLRK1 and four subunits of HCST/DAP10. Interacts (via transmembrane domain) with HCST/DAP10 (via transmembrane domain); the interaction is required for KLRK1 NK cell surface and induces NK cell-mediated cytotoxicity. Can form disulfide-bonded heterodimer with CD94. Interacts with CEACAM1; recruits PTPN6 that dephosphorylates VAV1. Detected in peripheral blood leukocytes, macrophages, monocytes and natural killer cells.

It is found in the cell membrane. Functions as an activating and costimulatory receptor involved in immunosurveillance upon binding to various cellular stress-inducible ligands displayed at the surface of autologous tumor cells and virus-infected cells. Provides both stimulatory and costimulatory innate immune responses on activated killer (NK) cells, leading to cytotoxic activity. Acts as a costimulatory receptor for T-cell receptor (TCR) in CD8(+) T-cell-mediated adaptive immune responses by amplifying T-cell activation. Stimulates perforin-mediated elimination of ligand-expressing tumor cells. Signaling involves calcium influx, culminating in the expression of TNF-alpha. Participates in NK cell-mediated bone marrow graft rejection. May play a regulatory role in differentiation and survival of NK cells. Binds to ligands belonging to various subfamilies of MHC class I-related glycoproteins. The protein is NKG2-D type II integral membrane protein (KLRK1) of Sus scrofa (Pig).